The sequence spans 236 residues: Uridylate kinase (236 aa).

ATP is bound at residue 12–15 (KLSG). Positions 20-25 (GEKGFG) are involved in allosteric activation by GTP. Residue Gly-54 coordinates UMP. ATP is bound by residues Gly-55 and Arg-59. UMP-binding positions include Asp-72 and 133 to 140 (TGNPYFST). 3 residues coordinate ATP: Asn-161, Tyr-166, and Asp-169.

The protein belongs to the UMP kinase family. Homohexamer.

It localises to the cytoplasm. It carries out the reaction UMP + ATP = UDP + ADP. It functions in the pathway pyrimidine metabolism; CTP biosynthesis via de novo pathway; UDP from UMP (UMPK route): step 1/1. Its activity is regulated as follows. Allosterically activated by GTP. Inhibited by UTP. Functionally, catalyzes the reversible phosphorylation of UMP to UDP. This chain is Uridylate kinase, found in Alkaliphilus metalliredigens (strain QYMF).